The chain runs to 597 residues: Elongation factor 4 (597 aa).

Positions 2-184 (DHIRNFSIIA…SLIAKVPPPK (183 aa)) constitute a tr-type G domain. GTP is bound by residues 14 to 19 (DHGKST) and 131 to 134 (NKID).

Belongs to the TRAFAC class translation factor GTPase superfamily. Classic translation factor GTPase family. LepA subfamily.

It localises to the cell inner membrane. It carries out the reaction GTP + H2O = GDP + phosphate + H(+). Its function is as follows. Required for accurate and efficient protein synthesis under certain stress conditions. May act as a fidelity factor of the translation reaction, by catalyzing a one-codon backward translocation of tRNAs on improperly translocated ribosomes. Back-translocation proceeds from a post-translocation (POST) complex to a pre-translocation (PRE) complex, thus giving elongation factor G a second chance to translocate the tRNAs correctly. Binds to ribosomes in a GTP-dependent manner. The polypeptide is Elongation factor 4 (Burkholderia pseudomallei (strain 1710b)).